Here is a 196-residue protein sequence, read N- to C-terminus: NAD(P)H-quinone oxidoreductase subunit I (196 aa).

4Fe-4S ferredoxin-type domains are found at residues 55-84 (GRIHFEFDKCIACEVCVRVCPINLPVVDWE) and 95-124 (KHYSIDFGVCIFCGNCVEYCPTNCLSMTEE). Positions 64, 67, 70, 74, 104, 107, 110, and 114 each coordinate [4Fe-4S] cluster. Residues 170–196 (SPHDLPEGSQRSGKRPEEIIEEAEASS) are disordered.

This sequence belongs to the complex I 23 kDa subunit family. In terms of assembly, NDH-1 is composed of at least 11 different subunits. The cofactor is [4Fe-4S] cluster.

Its subcellular location is the cellular thylakoid membrane. The catalysed reaction is a plastoquinone + NADH + (n+1) H(+)(in) = a plastoquinol + NAD(+) + n H(+)(out). The enzyme catalyses a plastoquinone + NADPH + (n+1) H(+)(in) = a plastoquinol + NADP(+) + n H(+)(out). Its function is as follows. NDH-1 shuttles electrons from an unknown electron donor, via FMN and iron-sulfur (Fe-S) centers, to quinones in the respiratory and/or the photosynthetic chain. The immediate electron acceptor for the enzyme in this species is believed to be plastoquinone. Couples the redox reaction to proton translocation, and thus conserves the redox energy in a proton gradient. The sequence is that of NAD(P)H-quinone oxidoreductase subunit I from Crocosphaera subtropica (strain ATCC 51142 / BH68) (Cyanothece sp. (strain ATCC 51142)).